The chain runs to 640 residues: Arogenate dehydrogenase 1, chloroplastic (640 aa).

The N-terminal 18 residues, 1–18 (MAETLITKPPLSLSFTSL), are a transit peptide targeting the chloroplast. 2 consecutive Prephenate/arogenate dehydrogenase domains span residues 53–334 (LRIA…GEND) and 365–640 (LKIG…LLTS).

It belongs to the prephenate/arogenate dehydrogenase family. Expressed in roots, stems, leaves, flowers, siliques and seeds. More abundant in seeds.

The protein resides in the plastid. It is found in the chloroplast. The catalysed reaction is L-arogenate + NADP(+) = L-tyrosine + CO2 + NADPH. It functions in the pathway amino-acid biosynthesis; L-tyrosine biosynthesis; L-tyrosine from L-arogenate (NADP(+) route): step 1/1. In terms of biological role, involved in the biosynthesis of tyrosine. Has no prephenate dehydrogenase activity. The polypeptide is Arogenate dehydrogenase 1, chloroplastic (TYRAAT1) (Arabidopsis thaliana (Mouse-ear cress)).